The following is a 1148-amino-acid chain: Transcription-repair-coupling factor (1148 aa).

In terms of domain architecture, Helicase ATP-binding spans 615-776 (DMCQPLAMDR…MSGMRDLSII (162 aa)). Residue 628–635 (GDVGFGKT) participates in ATP binding. Positions 729-732 (DEEH) match the DEEH box motif. The Helicase C-terminal domain occupies 798 to 951 (VREAILREIL…GFALATHDLE (154 aa)).

It in the N-terminal section; belongs to the UvrB family. In the C-terminal section; belongs to the helicase family. RecG subfamily. As to quaternary structure, monomer. Interacts with UvrA and RNAP.

It localises to the cytoplasm. Functionally, couples transcription and DNA repair by recognizing RNA polymerase (RNAP) stalled at DNA lesions. Mediates ATP-dependent release of RNAP and its truncated transcript from the DNA, and recruitment of nucleotide excision repair machinery to the damaged site. Can also dissociate RNAP that is blocked by low concentration of nucleoside triphosphates or by physical obstruction, such as bound proteins. In addition, can rescue arrested complexes by promoting forward translocation. Has ATPase activity, which is required for removal of stalled RNAP, but seems to lack helicase activity. May act through a translocase activity that rewinds upstream DNA, leading either to translocation or to release of RNAP when the enzyme active site cannot continue elongation. The polypeptide is Transcription-repair-coupling factor (Escherichia coli (strain K12)).